Here is a 359-residue protein sequence, read N- to C-terminus: AA9 family lytic polysaccharide monooxygenase B (359 aa).

The N-terminal stretch at M1–A18 is a signal peptide. Cu(2+) contacts are provided by H19 and H102. 2 disulfides stabilise this stretch: C72–C190 and C113–C117. An N-linked (GlcNAc...) asparagine glycan is attached at N150. The O2 site is built by H176 and Q185. Y187 lines the Cu(2+) pocket. The tract at residues G241 to K310 is disordered. Polar residues predominate over residues G245 to H254. Over residues T255–I304 the composition is skewed to low complexity. N345 carries an N-linked (GlcNAc...) asparagine glycan.

The protein belongs to the polysaccharide monooxygenase AA9 family. Cu(2+) serves as cofactor.

It is found in the secreted. The catalysed reaction is [(1-&gt;4)-beta-D-glucosyl]n+m + reduced acceptor + O2 = 4-dehydro-beta-D-glucosyl-[(1-&gt;4)-beta-D-glucosyl]n-1 + [(1-&gt;4)-beta-D-glucosyl]m + acceptor + H2O.. Lytic polysaccharide monooxygenase (LPMO) that depolymerizes crystalline and amorphous polysaccharides via the oxidation of scissile alpha- or beta-(1-4)-glycosidic bonds, yielding C1 and C4 oxidation products. Catalysis by LPMOs requires the reduction of the active-site copper from Cu(II) to Cu(I) by a reducing agent and H(2)O(2) or O(2) as a cosubstrate. Active on cellulose and on xyloglucan for deconstruction of plant biomass. The polypeptide is AA9 family lytic polysaccharide monooxygenase B (Geotrichum candidum (Oospora lactis)).